Here is a 174-residue protein sequence, read N- to C-terminus: Ribosome maturation factor RimM (174 aa).

Positions 98–171 constitute a PRC barrel domain; that stretch reads EGEFYFHEII…KIEIELMEGL (74 aa).

It belongs to the RimM family. Binds ribosomal protein uS19.

It localises to the cytoplasm. In terms of biological role, an accessory protein needed during the final step in the assembly of 30S ribosomal subunit, possibly for assembly of the head region. Essential for efficient processing of 16S rRNA. May be needed both before and after RbfA during the maturation of 16S rRNA. It has affinity for free ribosomal 30S subunits but not for 70S ribosomes. In Bacillus subtilis (strain 168), this protein is Ribosome maturation factor RimM.